Reading from the N-terminus, the 148-residue chain is Ubiquitin-conjugating enzyme E2-17 kDa (148 aa).

A UBC core domain is found at 1-147 (MASKRILKEL…ARSWTQKYAM (147 aa)). Catalysis depends on Cys85, which acts as the Glycyl thioester intermediate.

It belongs to the ubiquitin-conjugating enzyme family.

The catalysed reaction is S-ubiquitinyl-[E1 ubiquitin-activating enzyme]-L-cysteine + [E2 ubiquitin-conjugating enzyme]-L-cysteine = [E1 ubiquitin-activating enzyme]-L-cysteine + S-ubiquitinyl-[E2 ubiquitin-conjugating enzyme]-L-cysteine.. Its pathway is protein modification; protein ubiquitination. Its function is as follows. Catalyzes the covalent attachment of ubiquitin to other proteins. Mediates the selective degradation of short-lived and abnormal proteins. The polypeptide is Ubiquitin-conjugating enzyme E2-17 kDa (Solanum lycopersicum (Tomato)).